The following is a 33-amino-acid chain: Neutrophil defensin 1 (33 aa).

Intrachain disulfides connect cysteine 3-cysteine 31, cysteine 5-cysteine 20, and cysteine 10-cysteine 30.

This sequence belongs to the alpha-defensin family.

Its subcellular location is the secreted. Anti-fungal and bactericidal activity, greater against Gram-positive bacteria. The sequence is that of Neutrophil defensin 1 from Mesocricetus auratus (Golden hamster).